Here is a 509-residue protein sequence, read N- to C-terminus: Cobyric acid synthase (509 aa).

Residues 262 to 459 (EIKVGIIKLP…IHGIFENDSW (198 aa)) form the GATase cobBQ-type domain. The active-site Nucleophile is the C343. H451 is a catalytic residue.

This sequence belongs to the CobB/CobQ family. CobQ subfamily.

Its pathway is cofactor biosynthesis; adenosylcobalamin biosynthesis. Functionally, catalyzes amidations at positions B, D, E, and G on adenosylcobyrinic A,C-diamide. NH(2) groups are provided by glutamine, and one molecule of ATP is hydrogenolyzed for each amidation. The protein is Cobyric acid synthase of Prochlorococcus marinus (strain MIT 9215).